Reading from the N-terminus, the 143-residue chain is Auxin-responsive protein SAUR67 (143 aa).

The protein belongs to the ARG7 family.

The protein localises to the cell membrane. May promote auxin-stimulated organ elongation, such as hypocotyls, stamen filaments and petals. This is Auxin-responsive protein SAUR67 from Arabidopsis thaliana (Mouse-ear cress).